Consider the following 234-residue polypeptide: HTH-type transcriptional regulator MT1864 (234 aa).

Positions 15–75 (EQIEAKIVEL…LLLVDAYSDL (61 aa)) constitute an HTH tetR-type domain. Residues 38–57 (SLRAIARNLGMVSSAVYRYV) constitute a DNA-binding region (H-T-H motif).

In terms of assembly, homodimer.

The protein resides in the cytoplasm. May participate in the regulatory network that controls the expression of MmpL lipid transporters. In Mycobacterium tuberculosis (strain CDC 1551 / Oshkosh), this protein is HTH-type transcriptional regulator MT1864.